The sequence spans 202 residues: Homeobox protein ceh-13 (202 aa).

2 disordered regions span residues P60–G83 and R166–K202. Positions A63–P81 are enriched in low complexity. Residues N114–E173 constitute a DNA-binding region (homeobox). A compositionally biased stretch (polar residues) spans T183–S194.

It is found in the nucleus. In Caenorhabditis elegans, this protein is Homeobox protein ceh-13 (ceh-13).